A 298-amino-acid chain; its full sequence is Lipoyl synthase (298 aa).

[4Fe-4S] cluster is bound by residues C43, C48, C54, C69, C73, C76, and S280. In terms of domain architecture, Radical SAM core spans 55-269 (FSSGTATFLI…AACGRGMGIP (215 aa)).

This sequence belongs to the radical SAM superfamily. Lipoyl synthase family. The cofactor is [4Fe-4S] cluster.

Its subcellular location is the cytoplasm. It carries out the reaction [[Fe-S] cluster scaffold protein carrying a second [4Fe-4S](2+) cluster] + N(6)-octanoyl-L-lysyl-[protein] + 2 oxidized [2Fe-2S]-[ferredoxin] + 2 S-adenosyl-L-methionine + 4 H(+) = [[Fe-S] cluster scaffold protein] + N(6)-[(R)-dihydrolipoyl]-L-lysyl-[protein] + 4 Fe(3+) + 2 hydrogen sulfide + 2 5'-deoxyadenosine + 2 L-methionine + 2 reduced [2Fe-2S]-[ferredoxin]. It functions in the pathway protein modification; protein lipoylation via endogenous pathway; protein N(6)-(lipoyl)lysine from octanoyl-[acyl-carrier-protein]: step 2/2. Functionally, catalyzes the radical-mediated insertion of two sulfur atoms into the C-6 and C-8 positions of the octanoyl moiety bound to the lipoyl domains of lipoate-dependent enzymes, thereby converting the octanoylated domains into lipoylated derivatives. This is Lipoyl synthase from Nitratidesulfovibrio vulgaris (strain DP4) (Desulfovibrio vulgaris).